A 35-amino-acid chain; its full sequence is Cycloamanide F proprotein (35 aa).

Positions 1 to 10 (MSDINATRLP) are excised as a propeptide. The segment at residues 11–18 (IVGILGLP) is a cross-link (cyclopeptide (Ile-Pro)). Positions 19–35 (CIGDDVNSTLTHGEDLC) are excised as a propeptide.

It belongs to the MSDIN fungal toxin family. In terms of processing, processed by the macrocyclase-peptidase enzyme POPB to yield a cyclic decapeptide. POPB first removes 10 residues from the N-terminus. Conformational trapping of the remaining peptide forces the enzyme to release this intermediate rather than proceed to macrocyclization. The enzyme rebinds the remaining peptide in a different conformation and catalyzes macrocyclization of the N-terminal 8 residues.

In terms of biological role, cyclic octapeptide that belongs to the MSDIN-like toxin family responsible for a large number of food poisoning cases and deaths. Cycloaminide E is structurally related to other cycloamanides that are non-toxic to mammals but show immunosuppressive activity. The protein is Cycloamanide F proprotein of Amanita phalloides (Death cap).